The chain runs to 611 residues: Exonuclease V, mitochondrial (611 aa).

A disordered region spans residues 19–42 (VTSEHEQVQSISKEESRSLSSNDL). Over residues 21 to 35 (SEHEQVQSISKEESR) the composition is skewed to basic and acidic residues. [4Fe-4S] cluster is bound by residues C147, C569, C572, and C578.

It belongs to the EXO5 family. Monomer. The cofactor is Mg(2+). [4Fe-4S] cluster is required as a cofactor.

It is found in the mitochondrion. Functionally, single strand DNA specific 5'exonuclease involved in mitochondrial DNA replication and recombination. Releases dinucleotides as main products of catalysis. Has the capacity to slide across 5'double-stranded DNA or 5'RNA sequences and resumes cutting two nucleotides downstream of the double-stranded-to-single-stranded junction or RNA-to-DNA junction, respectively. The polypeptide is Exonuclease V, mitochondrial (EXO5) (Candida albicans (strain WO-1) (Yeast)).